The primary structure comprises 50 residues: Insulin-1 (50 aa).

Disulfide bonds link C7–C36, C19–C49, and C35–C40.

Belongs to the insulin family. As to quaternary structure, heterodimer of a B chain and an A chain linked by two disulfide bonds.

It is found in the secreted. Insulin decreases blood glucose concentration. It increases cell permeability to monosaccharides, amino acids and fatty acids. It accelerates glycolysis, the pentose phosphate cycle, and glycogen synthesis in liver. The polypeptide is Insulin-1 (Thunnus orientalis (North Pacific bluefin tuna)).